Here is a 565-residue protein sequence, read N- to C-terminus: Proline--tRNA ligase (565 aa).

It belongs to the class-II aminoacyl-tRNA synthetase family. ProS type 1 subfamily. Homodimer.

It is found in the cytoplasm. The catalysed reaction is tRNA(Pro) + L-proline + ATP = L-prolyl-tRNA(Pro) + AMP + diphosphate. Functionally, catalyzes the attachment of proline to tRNA(Pro) in a two-step reaction: proline is first activated by ATP to form Pro-AMP and then transferred to the acceptor end of tRNA(Pro). As ProRS can inadvertently accommodate and process non-cognate amino acids such as alanine and cysteine, to avoid such errors it has two additional distinct editing activities against alanine. One activity is designated as 'pretransfer' editing and involves the tRNA(Pro)-independent hydrolysis of activated Ala-AMP. The other activity is designated 'posttransfer' editing and involves deacylation of mischarged Ala-tRNA(Pro). The misacylated Cys-tRNA(Pro) is not edited by ProRS. The polypeptide is Proline--tRNA ligase (Francisella tularensis subsp. tularensis (strain FSC 198)).